Consider the following 198-residue polypeptide: Imidazoleglycerol-phosphate dehydratase (198 aa).

The protein belongs to the imidazoleglycerol-phosphate dehydratase family.

The protein resides in the cytoplasm. It carries out the reaction D-erythro-1-(imidazol-4-yl)glycerol 3-phosphate = 3-(imidazol-4-yl)-2-oxopropyl phosphate + H2O. Its pathway is amino-acid biosynthesis; L-histidine biosynthesis; L-histidine from 5-phospho-alpha-D-ribose 1-diphosphate: step 6/9. The polypeptide is Imidazoleglycerol-phosphate dehydratase (Agrobacterium fabrum (strain C58 / ATCC 33970) (Agrobacterium tumefaciens (strain C58))).